The chain runs to 504 residues: Probable cytosol aminopeptidase (504 aa).

Residues lysine 272 and aspartate 277 each coordinate Mn(2+). The active site involves lysine 284. Mn(2+) is bound by residues aspartate 295, aspartate 354, and glutamate 356. Arginine 358 is an active-site residue.

The protein belongs to the peptidase M17 family. Mn(2+) is required as a cofactor.

The protein localises to the cytoplasm. The catalysed reaction is Release of an N-terminal amino acid, Xaa-|-Yaa-, in which Xaa is preferably Leu, but may be other amino acids including Pro although not Arg or Lys, and Yaa may be Pro. Amino acid amides and methyl esters are also readily hydrolyzed, but rates on arylamides are exceedingly low.. The enzyme catalyses Release of an N-terminal amino acid, preferentially leucine, but not glutamic or aspartic acids.. Its function is as follows. Presumably involved in the processing and regular turnover of intracellular proteins. Catalyzes the removal of unsubstituted N-terminal amino acids from various peptides. The sequence is that of Probable cytosol aminopeptidase from Chlorobaculum tepidum (strain ATCC 49652 / DSM 12025 / NBRC 103806 / TLS) (Chlorobium tepidum).